Reading from the N-terminus, the 376-residue chain is Succinyl-diaminopimelate desuccinylase (376 aa).

Histidine 67 lines the Zn(2+) pocket. Aspartate 69 is a catalytic residue. Position 100 (aspartate 100) interacts with Zn(2+). Glutamate 134 functions as the Proton acceptor in the catalytic mechanism. Residues glutamate 135, glutamate 163, and histidine 349 each contribute to the Zn(2+) site.

The protein belongs to the peptidase M20A family. DapE subfamily. As to quaternary structure, homodimer. It depends on Zn(2+) as a cofactor. Co(2+) is required as a cofactor.

The enzyme catalyses N-succinyl-(2S,6S)-2,6-diaminopimelate + H2O = (2S,6S)-2,6-diaminopimelate + succinate. It functions in the pathway amino-acid biosynthesis; L-lysine biosynthesis via DAP pathway; LL-2,6-diaminopimelate from (S)-tetrahydrodipicolinate (succinylase route): step 3/3. Functionally, catalyzes the hydrolysis of N-succinyl-L,L-diaminopimelic acid (SDAP), forming succinate and LL-2,6-diaminopimelate (DAP), an intermediate involved in the bacterial biosynthesis of lysine and meso-diaminopimelic acid, an essential component of bacterial cell walls. In Proteus mirabilis (strain HI4320), this protein is Succinyl-diaminopimelate desuccinylase.